A 417-amino-acid polypeptide reads, in one-letter code: MRLTLLLAALLGYIYCQETFVGDQVLEIIPSHEEQIRTLLQLEAEEHLELDFWKSPTIPGETVHVRVPFASIQAVKVFLESQGIDYSIMIEDVQVLLDQEREEMLFNQQRERGGNFNFEAYHTLEEIYQEMDNLVAENPGLVSKVNLGSSFENRPMNVLKFSTGGDKPAIWLDAGIHAREWVTQATALWTANKIASDYGTDPAITSLLNTLDIFLLPVTNPDGYVFSQTTNRMWRKTRSKRSGSGCVGVDPNRNWDANFGGPGASSSPCSDSYHGPKPNSEVEVKSIVDFIKSHGKVKAFITLHSYSQLLMFPYGYKCTKPDDFNELDEVAQKAAQALKRLHGTSYKVGPICSVIYQASGGSIDWAYDLGIKYSFAFELRDTAFYGFLLPAKQILPTAEETWLGLKTIMEHVRDHPY.

Positions 1–16 (MRLTLLLAALLGYIYC) are cleaved as a signal peptide. The propeptide at 17–112 (QETFVGDQVL…EMLFNQQRER (96 aa)) is activation peptide. Residues 120–412 (AYHTLEEIYQ…LGLKTIMEHV (293 aa)) form the Peptidase M14 domain. 2 residues coordinate Zn(2+): histidine 177 and glutamate 180. Substrate is bound by residues 177-180 (HARE), arginine 235, and 252-253 (NR). Residues cysteine 246 and cysteine 269 are joined by a disulfide bond. Position 304 (histidine 304) interacts with Zn(2+). 305-306 (SY) contacts substrate. A disulfide bridge links cysteine 318 with cysteine 352. Tyrosine 356 is a substrate binding site. Residue glutamate 378 is the Proton donor/acceptor of the active site.

Belongs to the peptidase M14 family. It depends on Zn(2+) as a cofactor.

Its subcellular location is the secreted. It catalyses the reaction Similar to that of carboxypeptidase A (EC 3.4.17.1), but with a preference for bulkier C-terminal residues.. Functionally, carboxypeptidase that catalyzes the release of a C-terminal amino acid, with a preference for large aromatic C-terminal residues. The sequence is that of Carboxypeptidase A2 (Cpa2) from Rattus norvegicus (Rat).